Reading from the N-terminus, the 372-residue chain is GTPase Obg (372 aa).

The 159-residue stretch at Met-1–Leu-159 folds into the Obg domain. Positions Leu-128–Gly-147 are disordered. The OBG-type G domain maps to Ala-160 to Ala-334. Residues Gly-166–Ser-173, Phe-191–Ala-195, Asp-213–Gly-216, Asn-284–Asp-287, and Ser-315–Leu-317 each bind GTP. Residues Ser-173 and Thr-193 each coordinate Mg(2+).

The protein belongs to the TRAFAC class OBG-HflX-like GTPase superfamily. OBG GTPase family. As to quaternary structure, monomer. Requires Mg(2+) as cofactor.

It localises to the cytoplasm. In terms of biological role, an essential GTPase which binds GTP, GDP and possibly (p)ppGpp with moderate affinity, with high nucleotide exchange rates and a fairly low GTP hydrolysis rate. Plays a role in control of the cell cycle, stress response, ribosome biogenesis and in those bacteria that undergo differentiation, in morphogenesis control. The protein is GTPase Obg of Burkholderia thailandensis (strain ATCC 700388 / DSM 13276 / CCUG 48851 / CIP 106301 / E264).